The sequence spans 524 residues: GMP synthase [glutamine-hydrolyzing] (524 aa).

Positions 9-207 (RILILDFGSQ…VIHICQCIPN (199 aa)) constitute a Glutamine amidotransferase type-1 domain. Catalysis depends on Cys-86, which acts as the Nucleophile. Active-site residues include His-181 and Glu-183. Residues 208–399 (WTTKHIIEDS…LGLPADLIYR (192 aa)) form the GMPS ATP-PPase domain. 235 to 241 (SGGVDSA) contacts ATP.

Homodimer.

It catalyses the reaction XMP + L-glutamine + ATP + H2O = GMP + L-glutamate + AMP + diphosphate + 2 H(+). Its pathway is purine metabolism; GMP biosynthesis; GMP from XMP (L-Gln route): step 1/1. Catalyzes the synthesis of GMP from XMP. This chain is GMP synthase [glutamine-hydrolyzing], found in Coxiella burnetii (strain CbuK_Q154) (Coxiella burnetii (strain Q154)).